The primary structure comprises 740 residues: Ribulose bisphosphate carboxylase, chloroplastic (740 aa).

A chloroplast-targeting transit peptide spans 1–55 (MPSSSFTTGLALGAGALVGANAFVAPTAKTTNLRAPTQEASLQVAASQQTEQPAP). A helical transmembrane segment spans residues 56-76 (STSALPWAFGAGACLALAAGG). Asn-213 contacts substrate. Lys-268 (proton acceptor) is an active-site residue. Lys-270 is a substrate binding site. Residues Lys-293, Asp-295, and Glu-296 each coordinate Mg(2+). Residue Lys-293 is modified to N6-carboxylysine. The active-site Proton acceptor is His-389. Substrate-binding residues include Arg-390, His-423, and Ser-470.

Belongs to the RuBisCO large chain family. Type II subfamily. Homodimer. The cofactor is Mg(2+).

It is found in the plastid. The protein resides in the chloroplast membrane. It carries out the reaction 2 (2R)-3-phosphoglycerate + 2 H(+) = D-ribulose 1,5-bisphosphate + CO2 + H2O. The catalysed reaction is D-ribulose 1,5-bisphosphate + O2 = 2-phosphoglycolate + (2R)-3-phosphoglycerate + 2 H(+). RuBisCO catalyzes two reactions: the carboxylation of D-ribulose 1,5-bisphosphate, the primary event in carbon dioxide fixation, as well as the oxidative fragmentation of the pentose substrate. Both reactions occur simultaneously and in competition at the same active site. The chain is Ribulose bisphosphate carboxylase, chloroplastic (rbcL) from Heterocapsa triquetra (Dinoflagellate).